A 282-amino-acid polypeptide reads, in one-letter code: Putative sugar uptake protein lp_2594 (282 aa).

The next 10 helical transmembrane spans lie at 2 to 21 (IFLIAIIPALCWGINPLLVG), 31 to 48 (MFGMGIGDGLIALIFWLF), 53 to 75 (VTISGVTFGLAMISGAAWAIGQL), 90 to 112 (MPISTALQLVGTSLIGVLMFGEW), 119 to 136 (ILGLLAIMLIVAGSALSA), 146 to 163 (FSCYLPLLMTTIGYWIYS), 176 to 194 (LFLPQMLGILIVAVGWAIY), 209 to 226 (TLPGILYGIAAFMYILSA), 233 to 252 (NAYIIGQLSVVISTLSGLFF), and 262 to 281 (IVSVATGLLFIFMGCVTTAL).

The protein belongs to the GRP transporter (TC 2.A.7.5) family.

It localises to the cell membrane. The sequence is that of Putative sugar uptake protein lp_2594 from Lactiplantibacillus plantarum (strain ATCC BAA-793 / NCIMB 8826 / WCFS1) (Lactobacillus plantarum).